A 783-amino-acid chain; its full sequence is B-cell scaffold protein with ankyrin repeats (783 aa).

The interaction with ITPR2 stretch occupies residues 1-154; the sequence is MLPVASGTRG…GYISVIRQIL (154 aa). The 129-residue stretch at 25–153 folds into the TIR domain; that stretch reads NAKDILLLYE…DGYISVIRQI (129 aa). Residues 199–326 enclose the DBB domain; it reads VLPGEIPCEK…EIPYYEFKHL (128 aa). 2 ANK repeats span residues 341–370 and 377–407; these read ELPTLLHCAAKFGLKNLALHLLQCSGATRA and DGSDLLHIAERHGHEELKEVFEDFLSQNTGR. Disordered regions lie at residues 422 to 521, 538 to 586, 604 to 624, and 641 to 670; these read FSTY…AASQ, MERS…EDNE, SFIINRPPAPTPRPTHIPPKE, and RQSDGDKFYSLPKKPDKTRMEGPTFPSTRD. Basic and acidic residues predominate over residues 444–479; it reads RNTDRSEEPERSVEMKEEEAGAEARRSLSEGERESS. Positions 505 to 515 are enriched in pro residues; sequence HCRPPLLPPRP. The span at 549 to 565 shows a compositional bias: basic and acidic residues; the sequence is ARPETREESSREEKKEE. Over residues 566-586 the composition is skewed to acidic residues; the sequence is AQEEEEEEENPYAFAETEDNE. Residues 610–620 show a composition bias toward pro residues; it reads PPAPTPRPTHI. Positions 641–660 are enriched in basic and acidic residues; that stretch reads RQSDGDKFYSLPKKPDKTRM. Residue Tyr649 is modified to Phosphotyrosine.

As to quaternary structure, interacts with LYN, ITPR1 and ITPR2. Post-translationally, phosphorylated on tyrosines upon BCR activation. In terms of tissue distribution, specifically expressed in spleen. Highly expressed in immature B-cells and recirculating B-cells, and at low levels in pro-B and pre-B cells.

Its function is as follows. Involved in B-cell receptor (BCR)-induced Ca(2+) mobilization from intracellular stores. Promotes Lyn-mediated phosphorylation of IP3 receptors 1 and 2. In Mus musculus (Mouse), this protein is B-cell scaffold protein with ankyrin repeats (Bank1).